Here is a 389-residue protein sequence, read N- to C-terminus: P2X purinoceptor 4a (389 aa).

Residues 1–36 (MSESVGCCDSVSQCFFDYYTSKILIIRSKKVGTLNR) lie on the Cytoplasmic side of the membrane. Residues 37–57 (FTQALVIAYVIGYVCVYNKGY) form a helical membrane-spanning segment. The Extracellular segment spans residues 58 to 343 (QDTDTVLSSV…NIIPTLLNMG (286 aa)). ATP-binding residues include Lys70 and Lys72. Residues Lys70 and Lys72 each contribute to the CTP site. N-linked (GlcNAc...) asparagine glycans are attached at residues Asn78 and Asn113. Intrachain disulfides connect Cys119–Cys168, Cys129–Cys152, and Cys135–Cys162. Arg143 serves as a coordination point for CTP. An N-linked (GlcNAc...) asparagine glycan is attached at Asn187. ATP is bound by residues Thr189 and Leu191. Thr189 contributes to the CTP binding site. Asn213 is a glycosylation site (N-linked (GlcNAc...) asparagine). Disulfide bonds link Cys220–Cys230 and Cys264–Cys273. Asn296, Arg298, and Lys316 together coordinate ATP. Residues Asn296, Arg298, and Lys316 each coordinate CTP. The chain crosses the membrane as a helical span at residues 344–364 (AGLALLGLVNVICDWIVLTFM). Residues 365–389 (KRKQHYKEQKYTYVDDFGLLHNEDK) lie on the Cytoplasmic side of the membrane.

This sequence belongs to the P2X receptor family. As to quaternary structure, functional P2XRs are organized as homomeric and heteromeric trimers. Forms homotrimer.

It is found in the cell membrane. Its subcellular location is the lysosome membrane. The enzyme catalyses K(+)(in) = K(+)(out). It carries out the reaction Na(+)(in) = Na(+)(out). The catalysed reaction is Ca(2+)(in) = Ca(2+)(out). Its activity is regulated as follows. Activated by ATP. pH-dependent and inhibited by acidic pH. In terms of biological role, ATP-gated nonselective transmembrane cation channel permeable to potassium, sodium and calcium. CTP, but not GTP or UTP, functions as a weak affinity agonist for P2RX4. Activated by extracellularly released ATP, it plays multiple role in immunity and central nervous system physiology. Could also function as an ATP-gated cation channel of lysosomal membranes. This is P2X purinoceptor 4a (p2rx4a) from Danio rerio (Zebrafish).